Here is a 449-residue protein sequence, read N- to C-terminus: 23S rRNA (uracil(1939)-C(5))-methyltransferase RlmD (449 aa).

Residues 12 to 70 (SKQLSAKQSFSVHQLDHLGAGIAQHQGKVVFIPGALPSETVQAQLTEQKKNYARAKLIK) form the TRAM domain. Positions 83, 89, 92, and 170 each coordinate [4Fe-4S] cluster. 6 residues coordinate S-adenosyl-L-methionine: glutamine 282, phenylalanine 311, asparagine 316, glutamate 332, aspartate 359, and aspartate 379. Cysteine 405 functions as the Nucleophile in the catalytic mechanism.

Belongs to the class I-like SAM-binding methyltransferase superfamily. RNA M5U methyltransferase family. RlmD subfamily.

The catalysed reaction is uridine(1939) in 23S rRNA + S-adenosyl-L-methionine = 5-methyluridine(1939) in 23S rRNA + S-adenosyl-L-homocysteine + H(+). Catalyzes the formation of 5-methyl-uridine at position 1939 (m5U1939) in 23S rRNA. The chain is 23S rRNA (uracil(1939)-C(5))-methyltransferase RlmD from Shewanella sp. (strain MR-4).